The primary structure comprises 123 residues: UPF0102 protein MCA0184 (123 aa).

It belongs to the UPF0102 family.

The protein is UPF0102 protein MCA0184 of Methylococcus capsulatus (strain ATCC 33009 / NCIMB 11132 / Bath).